We begin with the raw amino-acid sequence, 203 residues long: V-type ATP synthase subunit D (203 aa).

Belongs to the V-ATPase D subunit family.

Produces ATP from ADP in the presence of a proton gradient across the membrane. The polypeptide is V-type ATP synthase subunit D (Streptococcus pneumoniae (strain Hungary19A-6)).